A 61-amino-acid chain; its full sequence is Large ribosomal subunit protein uL30 (61 aa).

Belongs to the universal ribosomal protein uL30 family. Part of the 50S ribosomal subunit.

The sequence is that of Large ribosomal subunit protein uL30 from Latilactobacillus sakei subsp. sakei (strain 23K) (Lactobacillus sakei subsp. sakei).